Reading from the N-terminus, the 658-residue chain is Glycogen debranching enzyme (658 aa).

Asp336 functions as the Nucleophile in the catalytic mechanism. Glu371 (proton donor) is an active-site residue. The segment at 459–484 (EANGEENRDGTNSNYSDNHGKEGLGG) is disordered.

This sequence belongs to the glycosyl hydrolase 13 family.

It carries out the reaction Hydrolysis of (1-&gt;6)-alpha-D-glucosidic linkages to branches with degrees of polymerization of three or four glucose residues in limit dextrin.. It participates in glycan degradation; glycogen degradation. Its function is as follows. Removes maltotriose and maltotetraose chains that are attached by 1,6-alpha-linkage to the limit dextrin main chain, generating a debranched limit dextrin. In Salmonella paratyphi A (strain ATCC 9150 / SARB42), this protein is Glycogen debranching enzyme.